Consider the following 253-residue polypeptide: Adapter protein MecA (253 aa).

It belongs to the MecA family. In terms of assembly, homodimer.

In terms of biological role, enables the recognition and targeting of unfolded and aggregated proteins to the ClpC protease or to other proteins involved in proteolysis. The protein is Adapter protein MecA of Streptococcus pyogenes serotype M18 (strain MGAS8232).